We begin with the raw amino-acid sequence, 257 residues long: Phosphate import ATP-binding protein PstB (257 aa).

In terms of domain architecture, ABC transporter spans 11–252 (FNISRLYLYI…PKNELTEKYV (242 aa)). 43-50 (GPSGSGKS) is an ATP binding site.

The protein belongs to the ABC transporter superfamily. Phosphate importer (TC 3.A.1.7) family. As to quaternary structure, the complex is composed of two ATP-binding proteins (PstB), two transmembrane proteins (PstC and PstA) and a solute-binding protein (PstS).

It is found in the cell membrane. It carries out the reaction phosphate(out) + ATP + H2O = ADP + 2 phosphate(in) + H(+). In terms of biological role, part of the ABC transporter complex PstSACB involved in phosphate import. Responsible for energy coupling to the transport system. The chain is Phosphate import ATP-binding protein PstB from Saccharolobus solfataricus (strain ATCC 35092 / DSM 1617 / JCM 11322 / P2) (Sulfolobus solfataricus).